The chain runs to 522 residues: Peptide chain release factor 3 (522 aa).

Positions 10–277 constitute a tr-type G domain; that stretch reads ASRKTFAIIS…TFVDFAPSPS (268 aa). GTP contacts are provided by residues 19-26, 87-91, and 141-144; these read SHPDAGKT, DTPGH, and NKMD.

The protein belongs to the TRAFAC class translation factor GTPase superfamily. Classic translation factor GTPase family. PrfC subfamily.

It is found in the cytoplasm. Its function is as follows. Increases the formation of ribosomal termination complexes and stimulates activities of RF-1 and RF-2. It binds guanine nucleotides and has strong preference for UGA stop codons. It may interact directly with the ribosome. The stimulation of RF-1 and RF-2 is significantly reduced by GTP and GDP, but not by GMP. The sequence is that of Peptide chain release factor 3 from Listeria innocua serovar 6a (strain ATCC BAA-680 / CLIP 11262).